The chain runs to 267 residues: Strigolactone esterase RMS3 (267 aa).

Ser-96 serves as the catalytic Nucleophile. Catalysis depends on residues Asp-218 and His-247.

This sequence belongs to the AB hydrolase superfamily.

The protein localises to the cytoplasm. It localises to the nucleus. Its function is as follows. Involved in strigolactone signaling pathway. Functions downstream of strigolactone synthesis, as a component of hormone signaling and as an enzyme that participates in the conversion of strigolactones to the bioactive form. Binds and hydrolyzes the synthetic strigolactone analog GR24 and its enantiomers in vitro. Forms a stable covalent complex with the D-ring of strigolactone, which is essential for hormone bioactivity. The D-ring is attached to His-247 of the catalytic triad. The hydrolysis of strigolactone into a covalently linked intermediate molecule is required to trigger strigolactone signaling. This mechanism defines RMS3 as a non-canonical hormone receptor with dual functions to generate and sense the active form of strigolactone. Strigolactones are hormones that inhibit tillering and shoot branching through the MAX-dependent pathway, contribute to the regulation of shoot architectural response to phosphate-limiting conditions and function as rhizosphere signal that stimulates hyphal branching of arbuscular mycorrhizal fungi and trigger seed germination of root parasitic weeds. The polypeptide is Strigolactone esterase RMS3 (Pisum sativum (Garden pea)).